Here is a 555-residue protein sequence, read N- to C-terminus: Formate--tetrahydrofolate ligase (555 aa).

65-72 (TPAGEGKS) contacts ATP.

This sequence belongs to the formate--tetrahydrofolate ligase family.

The enzyme catalyses (6S)-5,6,7,8-tetrahydrofolate + formate + ATP = (6R)-10-formyltetrahydrofolate + ADP + phosphate. It participates in one-carbon metabolism; tetrahydrofolate interconversion. This chain is Formate--tetrahydrofolate ligase, found in Staphylococcus aureus (strain Mu3 / ATCC 700698).